A 77-amino-acid chain; its full sequence is Sec-independent protein translocase protein TatA (77 aa).

The chain crosses the membrane as a helical span at residues 1–21 (MGGISIWQLLIIALIVVLLFG). 2 stretches are compositionally biased toward basic and acidic residues: residues 47–56 (EKKALEDKEA) and 65–77 (TEKK…KEQA). Residues 47-77 (EKKALEDKEAAAQTTQQATEKKPEADKKEQA) form a disordered region.

The protein belongs to the TatA/E family. As to quaternary structure, the Tat system comprises two distinct complexes: a TatABC complex, containing multiple copies of TatA, TatB and TatC subunits, and a separate TatA complex, containing only TatA subunits. Substrates initially bind to the TatABC complex, which probably triggers association of the separate TatA complex to form the active translocon.

It localises to the cell inner membrane. Part of the twin-arginine translocation (Tat) system that transports large folded proteins containing a characteristic twin-arginine motif in their signal peptide across membranes. TatA could form the protein-conducting channel of the Tat system. The polypeptide is Sec-independent protein translocase protein TatA (Shewanella amazonensis (strain ATCC BAA-1098 / SB2B)).